We begin with the raw amino-acid sequence, 552 residues long: Arginine--tRNA ligase (552 aa).

Residues 130 to 140 (ANPTGPIHLGG) carry the 'HIGH' region motif.

This sequence belongs to the class-I aminoacyl-tRNA synthetase family. Monomer.

The protein localises to the cytoplasm. The catalysed reaction is tRNA(Arg) + L-arginine + ATP = L-arginyl-tRNA(Arg) + AMP + diphosphate. The protein is Arginine--tRNA ligase of Nocardia farcinica (strain IFM 10152).